A 206-amino-acid chain; its full sequence is Ribosome maturation factor RimM (206 aa).

Residues 113–206 (DDEYYWVDLI…RIDSNWPTEL (94 aa)) enclose the PRC barrel domain.

Belongs to the RimM family. Binds ribosomal protein uS19.

It localises to the cytoplasm. An accessory protein needed during the final step in the assembly of 30S ribosomal subunit, possibly for assembly of the head region. Essential for efficient processing of 16S rRNA. May be needed both before and after RbfA during the maturation of 16S rRNA. It has affinity for free ribosomal 30S subunits but not for 70S ribosomes. In Bordetella petrii (strain ATCC BAA-461 / DSM 12804 / CCUG 43448), this protein is Ribosome maturation factor RimM.